The sequence spans 401 residues: Probable acid ceramidase (401 aa).

The N-terminal stretch at 1-22 (MKPVAISLSLLLLVTLLPGSEQ) is a signal peptide. N-linked (GlcNAc...) asparagine glycosylation is found at N101, N303, and N371.

This sequence belongs to the acid ceramidase family.

The enzyme catalyses an N-acyl-sphingoid base + H2O = a sphingoid base + a fatty acid. It catalyses the reaction an N-acylsphing-4-enine + H2O = sphing-4-enine + a fatty acid. It carries out the reaction an N-acyl-15-methylhexadecasphing-4-enine + H2O = 15-methylhexadecasphing-4-enine + a fatty acid. Its function is as follows. Catalyzes the hydrolysis of ceramides into sphingoid base and free fatty acid. C.elegans contain specific sphingoid bases, which are unique or different in structure compared to the sphingoid bases found in other animals. Two examples of these distinctive compounds are: 15-methylhexadecasphinganine and 15-methylhexadecasphing-4-enine. This chain is Probable acid ceramidase, found in Caenorhabditis elegans.